Consider the following 371-residue polypeptide: 4-hydroxy-3-methylbut-2-en-1-yl diphosphate synthase (flavodoxin) (371 aa).

[4Fe-4S] cluster is bound by residues C272, C275, C307, and E314.

This sequence belongs to the IspG family. [4Fe-4S] cluster serves as cofactor.

It carries out the reaction (2E)-4-hydroxy-3-methylbut-2-enyl diphosphate + oxidized [flavodoxin] + H2O + 2 H(+) = 2-C-methyl-D-erythritol 2,4-cyclic diphosphate + reduced [flavodoxin]. It participates in isoprenoid biosynthesis; isopentenyl diphosphate biosynthesis via DXP pathway; isopentenyl diphosphate from 1-deoxy-D-xylulose 5-phosphate: step 5/6. In terms of biological role, converts 2C-methyl-D-erythritol 2,4-cyclodiphosphate (ME-2,4cPP) into 1-hydroxy-2-methyl-2-(E)-butenyl 4-diphosphate. The chain is 4-hydroxy-3-methylbut-2-en-1-yl diphosphate synthase (flavodoxin) from Pseudomonas aeruginosa (strain LESB58).